Here is a 312-residue protein sequence, read N- to C-terminus: Homoserine O-acetyltransferase (312 aa).

Catalysis depends on Cys-142, which acts as the Acyl-thioester intermediate. Residues Lys-163 and Ser-192 each contribute to the substrate site. The Proton acceptor role is filled by His-235. Residue Glu-237 is part of the active site. Arg-249 serves as a coordination point for substrate.

This sequence belongs to the MetA family.

The protein localises to the cytoplasm. The catalysed reaction is L-homoserine + acetyl-CoA = O-acetyl-L-homoserine + CoA. The protein operates within amino-acid biosynthesis; L-methionine biosynthesis via de novo pathway; O-acetyl-L-homoserine from L-homoserine: step 1/1. Functionally, transfers an acetyl group from acetyl-CoA to L-homoserine, forming acetyl-L-homoserine. The protein is Homoserine O-acetyltransferase of Chelativorans sp. (strain BNC1).